The chain runs to 332 residues: DNA-directed RNA polymerase subunit alpha (332 aa).

The segment at 1 to 234 (MTVTANQVLR…DQLSVFGDFT (234 aa)) is alpha N-terminal domain (alpha-NTD). An alpha C-terminal domain (alpha-CTD) region spans residues 248–332 (VDPVLLRPID…AGVASHGMLG (85 aa)).

Belongs to the RNA polymerase alpha chain family. Homodimer. The RNAP catalytic core consists of 2 alpha, 1 beta, 1 beta' and 1 omega subunit. When a sigma factor is associated with the core the holoenzyme is formed, which can initiate transcription.

The catalysed reaction is RNA(n) + a ribonucleoside 5'-triphosphate = RNA(n+1) + diphosphate. DNA-dependent RNA polymerase catalyzes the transcription of DNA into RNA using the four ribonucleoside triphosphates as substrates. The polypeptide is DNA-directed RNA polymerase subunit alpha (Stenotrophomonas maltophilia (strain R551-3)).